Here is a 496-residue protein sequence, read N- to C-terminus: Glycerol kinase (496 aa).

Thr-11 provides a ligand contact to ADP. ATP is bound by residues Thr-11, Thr-12, and Ser-13. Thr-11 lines the sn-glycerol 3-phosphate pocket. ADP is bound at residue Arg-15. Arg-81, Glu-82, Tyr-133, and Asp-242 together coordinate sn-glycerol 3-phosphate. Glycerol-binding residues include Arg-81, Glu-82, Tyr-133, Asp-242, and Gln-243. Residues Thr-264 and Gly-307 each contribute to the ADP site. Positions 264, 307, 311, and 408 each coordinate ATP. Residues Gly-408 and Asn-412 each contribute to the ADP site.

This sequence belongs to the FGGY kinase family.

It catalyses the reaction glycerol + ATP = sn-glycerol 3-phosphate + ADP + H(+). Its pathway is polyol metabolism; glycerol degradation via glycerol kinase pathway; sn-glycerol 3-phosphate from glycerol: step 1/1. With respect to regulation, inhibited by fructose 1,6-bisphosphate (FBP). In terms of biological role, key enzyme in the regulation of glycerol uptake and metabolism. Catalyzes the phosphorylation of glycerol to yield sn-glycerol 3-phosphate. In Trichlorobacter lovleyi (strain ATCC BAA-1151 / DSM 17278 / SZ) (Geobacter lovleyi), this protein is Glycerol kinase.